A 267-amino-acid polypeptide reads, in one-letter code: 2-keto-3-deoxy-L-rhamnonate aldolase (267 aa).

Catalysis depends on His49, which acts as the Proton acceptor. Residue Gln151 participates in substrate binding. Glu153 lines the Mg(2+) pocket. 2 residues coordinate substrate: Ala178 and Asp179. Residue Asp179 coordinates Mg(2+).

This sequence belongs to the HpcH/HpaI aldolase family. KDR aldolase subfamily. In terms of assembly, homohexamer. The cofactor is Mg(2+).

The catalysed reaction is 2-dehydro-3-deoxy-L-rhamnonate = (S)-lactaldehyde + pyruvate. Its function is as follows. Catalyzes the reversible retro-aldol cleavage of 2-keto-3-deoxy-L-rhamnonate (KDR) to pyruvate and lactaldehyde. The protein is 2-keto-3-deoxy-L-rhamnonate aldolase of Salmonella dublin (strain CT_02021853).